The sequence spans 132 residues: Aspartate 1-decarboxylase (132 aa).

Serine 25 functions as the Schiff-base intermediate with substrate; via pyruvic acid in the catalytic mechanism. The residue at position 25 (serine 25) is a Pyruvic acid (Ser). Threonine 57 contacts substrate. The active-site Proton donor is the tyrosine 58. A substrate-binding site is contributed by 73–75; it reads GAA.

It belongs to the PanD family. Heterooctamer of four alpha and four beta subunits. Requires pyruvate as cofactor. Is synthesized initially as an inactive proenzyme, which is activated by self-cleavage at a specific serine bond to produce a beta-subunit with a hydroxyl group at its C-terminus and an alpha-subunit with a pyruvoyl group at its N-terminus.

The protein resides in the cytoplasm. It carries out the reaction L-aspartate + H(+) = beta-alanine + CO2. Its pathway is cofactor biosynthesis; (R)-pantothenate biosynthesis; beta-alanine from L-aspartate: step 1/1. Its function is as follows. Catalyzes the pyruvoyl-dependent decarboxylation of aspartate to produce beta-alanine. This Pelotomaculum thermopropionicum (strain DSM 13744 / JCM 10971 / SI) protein is Aspartate 1-decarboxylase.